Consider the following 293-residue polypeptide: Bifunctional protein FolD (293 aa).

Residues 165–167 (GRG), T192, and V233 contribute to the NADP(+) site.

The protein belongs to the tetrahydrofolate dehydrogenase/cyclohydrolase family. In terms of assembly, homodimer.

The catalysed reaction is (6R)-5,10-methylene-5,6,7,8-tetrahydrofolate + NADP(+) = (6R)-5,10-methenyltetrahydrofolate + NADPH. The enzyme catalyses (6R)-5,10-methenyltetrahydrofolate + H2O = (6R)-10-formyltetrahydrofolate + H(+). Its pathway is one-carbon metabolism; tetrahydrofolate interconversion. Functionally, catalyzes the oxidation of 5,10-methylenetetrahydrofolate to 5,10-methenyltetrahydrofolate and then the hydrolysis of 5,10-methenyltetrahydrofolate to 10-formyltetrahydrofolate. The polypeptide is Bifunctional protein FolD (Streptomyces griseus subsp. griseus (strain JCM 4626 / CBS 651.72 / NBRC 13350 / KCC S-0626 / ISP 5235)).